An 833-amino-acid polypeptide reads, in one-letter code: DNA ligase (833 aa).

Residues 35 to 39 (DVEYD), 84 to 85 (SL), and E115 contribute to the NAD(+) site. K117 serves as the catalytic N6-AMP-lysine intermediate. Positions 138, 175, 292, and 316 each coordinate NAD(+). 4 residues coordinate Zn(2+): C410, C413, C428, and C434. Residues 750–833 (VQAGPLDGQT…AFLSEHGQAV (84 aa)) form the BRCT domain.

It belongs to the NAD-dependent DNA ligase family. LigA subfamily. Mg(2+) is required as a cofactor. Requires Mn(2+) as cofactor.

It catalyses the reaction NAD(+) + (deoxyribonucleotide)n-3'-hydroxyl + 5'-phospho-(deoxyribonucleotide)m = (deoxyribonucleotide)n+m + AMP + beta-nicotinamide D-nucleotide.. Functionally, DNA ligase that catalyzes the formation of phosphodiester linkages between 5'-phosphoryl and 3'-hydroxyl groups in double-stranded DNA using NAD as a coenzyme and as the energy source for the reaction. It is essential for DNA replication and repair of damaged DNA. The sequence is that of DNA ligase from Xanthomonas campestris pv. campestris (strain 8004).